Consider the following 168-residue polypeptide: Putative gustatory receptor clone PTE03 (168 aa).

Topologically, residues 1–25 are extracellular; that stretch reads TTVPKMLINLQKQNKAISYAGCITQ. An intrachain disulfide couples Cys22 to Cys104. The chain crosses the membrane as a helical span at residues 26–45; that stretch reads LSFVLLFAGMENFLLAAMAY. Residues 46–67 lie on the Cytoplasmic side of the membrane; that stretch reads DRYVAICKPLRYTAIMKAHLCL. Residues 68–88 form a helical membrane-spanning segment; sequence VMTLLSLCISIVDALLHGLMI. Residues 89–121 are Extracellular-facing; it reads LRLSFCTFLEIPHYFCELYQVIKLSCSDTLINN. A helical transmembrane segment spans residues 122–143; it reads ILVYTMTSTLGGVPLGGIIFSY. The Cytoplasmic portion of the chain corresponds to 144 to 165; it reads FKIISSILRMPSSGSRHRAFST. The helical transmembrane segment at 166–168 threads the bilayer; that stretch reads CGS.

It belongs to the G-protein coupled receptor 1 family. In terms of tissue distribution, tongue specific.

The protein localises to the cell membrane. Possible taste receptor. This Rattus norvegicus (Rat) protein is Putative gustatory receptor clone PTE03 (Olr1145).